A 129-amino-acid chain; its full sequence is Small ribosomal subunit protein uS11 (129 aa).

It belongs to the universal ribosomal protein uS11 family. As to quaternary structure, part of the 30S ribosomal subunit. Interacts with proteins S7 and S18. Binds to IF-3.

Its function is as follows. Located on the platform of the 30S subunit, it bridges several disparate RNA helices of the 16S rRNA. Forms part of the Shine-Dalgarno cleft in the 70S ribosome. In Staphylococcus carnosus (strain TM300), this protein is Small ribosomal subunit protein uS11.